We begin with the raw amino-acid sequence, 276 residues long: S-adenosylmethionine-dependent nucleotide dehydratase (276 aa).

One can recognise a Radical SAM core domain in the interval 6–216; it reads TSVRKFRSAN…RRRHEDIGCI (211 aa). [4Fe-4S] cluster-binding residues include cysteine 22, cysteine 26, and cysteine 29.

This sequence belongs to the radical SAM superfamily. Viperin family. Requires [4Fe-4S] cluster as cofactor.

It carries out the reaction CTP + AH2 + S-adenosyl-L-methionine = 3'-deoxy-3',4'-didehydro-CTP + 5'-deoxyadenosine + L-methionine + A + H2O + H(+). Expression of pVip50 in E.coli (strain MG1655) confers resistance to phage P1; has no effect against T7. Catalyzes the conversion of cytosine triphosphate (CTP) to 3'-deoxy-3',4'-didehydro-CTP (ddhCTP), probably via a SAM-dependent radical mechanism. The modified nucleotide represses transcription from T7 RNA polymerase-directed genes (possibly by acting as chain terminators), strongly suggesting these nucleotides block viral polymerase transcription. How this protein allows bacteria to resist viruses that do not encode their own RNA polymerase (such as lambda, P1) is unknown. The protein is S-adenosylmethionine-dependent nucleotide dehydratase of Thermoplasmatales archaeon (strain ISO4-H5).